The following is a 121-amino-acid chain: Large ribosomal subunit protein uL18 (121 aa).

The tract at residues 63 to 88 (AAIRPDPSPKKSQKQPPKTHKRYNLK) is disordered. A compositionally biased stretch (basic residues) spans 73-87 (KSQKQPPKTHKRYNL).

This sequence belongs to the universal ribosomal protein uL18 family. Component of the large ribosomal subunit (LSU).

Its subcellular location is the cytoplasm. The protein resides in the nucleus. Its function is as follows. Component of the ribosome, a large ribonucleoprotein complex responsible for the synthesis of proteins in the cell. The small ribosomal subunit (SSU) binds messenger RNAs (mRNAs) and translates the encoded message by selecting cognate aminoacyl-transfer RNA (tRNA) molecules. The large subunit (LSU) contains the ribosomal catalytic site termed the peptidyl transferase center (PTC), which catalyzes the formation of peptide bonds, thereby polymerizing the amino acids delivered by tRNAs into a polypeptide chain. The nascent polypeptides leave the ribosome through a tunnel in the LSU and interact with protein factors that function in enzymatic processing, targeting, and the membrane insertion of nascent chains at the exit of the ribosomal tunnel. This Solanum melongena (Eggplant) protein is Large ribosomal subunit protein uL18 (RPL5).